The sequence spans 808 residues: Phenylalanine--tRNA ligase beta subunit (808 aa).

Residues 40-149 form the tRNA-binding domain; that stretch reads RPELDFVKIV…DQAEVGKTIR (110 aa). In terms of domain architecture, B5 spans 407–484; it reads HKEVRIHTDI…RTKGYDTIQV (78 aa). Mg(2+)-binding residues include Asp-462, Asp-468, Glu-471, and Glu-472. One can recognise an FDX-ACB domain in the interval 716–808; it reads SQFPEAEIDL…LAGKNGFVLR (93 aa).

Belongs to the phenylalanyl-tRNA synthetase beta subunit family. Type 1 subfamily. Tetramer of two alpha and two beta subunits. The cofactor is Mg(2+).

The protein localises to the cytoplasm. It catalyses the reaction tRNA(Phe) + L-phenylalanine + ATP = L-phenylalanyl-tRNA(Phe) + AMP + diphosphate + H(+). The polypeptide is Phenylalanine--tRNA ligase beta subunit (Leptospira interrogans serogroup Icterohaemorrhagiae serovar copenhageni (strain Fiocruz L1-130)).